Reading from the N-terminus, the 359-residue chain is Fructose-bisphosphate aldolase class 2 (359 aa).

S61 serves as a coordination point for D-glyceraldehyde 3-phosphate. D110 serves as the catalytic Proton donor. 4 residues coordinate Zn(2+): H111, D145, E175, and H227. G228 is a binding site for dihydroxyacetone phosphate. H265 provides a ligand contact to Zn(2+). Residues 266 to 268 and 287 to 290 contribute to the dihydroxyacetone phosphate site; these read GGS and NIDT.

This sequence belongs to the class II fructose-bisphosphate aldolase family. Requires Zn(2+) as cofactor.

It catalyses the reaction beta-D-fructose 1,6-bisphosphate = D-glyceraldehyde 3-phosphate + dihydroxyacetone phosphate. It participates in carbohydrate degradation; glycolysis; D-glyceraldehyde 3-phosphate and glycerone phosphate from D-glucose: step 4/4. Functionally, catalyzes the aldol condensation of dihydroxyacetone phosphate (DHAP or glycerone-phosphate) with glyceraldehyde 3-phosphate (G3P) to form fructose 1,6-bisphosphate (FBP) in gluconeogenesis and the reverse reaction in glycolysis. In Buchnera aphidicola subsp. Schizaphis graminum (strain Sg), this protein is Fructose-bisphosphate aldolase class 2 (fbaA).